The following is a 413-amino-acid chain: Serine hydroxymethyltransferase (413 aa).

(6S)-5,6,7,8-tetrahydrofolate is bound by residues Leu117 and 121–123; that span reads GHL. Lys226 carries the post-translational modification N6-(pyridoxal phosphate)lysine. 349 to 351 contacts (6S)-5,6,7,8-tetrahydrofolate; the sequence is SPF.

The protein belongs to the SHMT family. As to quaternary structure, homodimer. The cofactor is pyridoxal 5'-phosphate.

It localises to the cytoplasm. It catalyses the reaction (6R)-5,10-methylene-5,6,7,8-tetrahydrofolate + glycine + H2O = (6S)-5,6,7,8-tetrahydrofolate + L-serine. It functions in the pathway one-carbon metabolism; tetrahydrofolate interconversion. The protein operates within amino-acid biosynthesis; glycine biosynthesis; glycine from L-serine: step 1/1. Functionally, catalyzes the reversible interconversion of serine and glycine with tetrahydrofolate (THF) serving as the one-carbon carrier. This reaction serves as the major source of one-carbon groups required for the biosynthesis of purines, thymidylate, methionine, and other important biomolecules. Also exhibits THF-independent aldolase activity toward beta-hydroxyamino acids, producing glycine and aldehydes, via a retro-aldol mechanism. This Listeria monocytogenes serotype 4b (strain F2365) protein is Serine hydroxymethyltransferase.